The following is a 475-amino-acid chain: Rho GTPase-activating protein 15 (475 aa).

The segment at 1 to 22 is disordered; sequence MERSTTSDTASEKPNPSHSTGA. One can recognise a PH domain in the interval 80–190; that stretch reads VVEKEGYLLK…WFHAIKNAID (111 aa). Positions 281-470 constitute a Rho-GAP domain; that stretch reads SHLHLVCEHE…LMLSEYSKIF (190 aa).

It is found in the cytoplasm. It localises to the membrane. In terms of biological role, GTPase activator for the Rho-type GTPases by converting them to an inactive GDP-bound state. The protein is Rho GTPase-activating protein 15 (ARHGAP15) of Gallus gallus (Chicken).